We begin with the raw amino-acid sequence, 102 residues long: uncharacterized protein (102 aa).

Residues 1-41 (MLFLDSYSLLIQFQRFKNWESPRRFSSSFPLLLFVFKPIFA) form the signal peptide.

This is an uncharacterized protein from Saccharomyces cerevisiae (strain ATCC 204508 / S288c) (Baker's yeast).